A 315-amino-acid chain; its full sequence is Homoserine kinase (315 aa).

ATP is bound at residue 97–107 (PPARGLGSSAT).

The protein belongs to the GHMP kinase family. Homoserine kinase subfamily.

Its subcellular location is the cytoplasm. The enzyme catalyses L-homoserine + ATP = O-phospho-L-homoserine + ADP + H(+). It functions in the pathway amino-acid biosynthesis; L-threonine biosynthesis; L-threonine from L-aspartate: step 4/5. Catalyzes the ATP-dependent phosphorylation of L-homoserine to L-homoserine phosphate. The polypeptide is Homoserine kinase (Prochlorococcus marinus (strain NATL2A)).